The following is a 282-amino-acid chain: MSDNIISFDHVTFTYPDSPRPAVSDLSFAIERGSWTALIGHNGSGKSTVSKLINGLLAPDDLDKSSITVDGVKLGADTVWEVREKVGIVFQNPDNQFVGATVSDDVAFGLENRAVPRPEMLKIVAQAVADVGMADYADSEPSNLSGGQKQRVAIAGILAVKPQVIILDESTSMLDPEGKEQILDLVRKIKEDNNLTVISITHDLEEAAGADQVLVLDDGQLLDQGKPEEIFPKVEMLKRIGLDIPFVYRLKQLLKERGIVLPDEIDDDEKLVQSLWQLNSKM.

The 238-residue stretch at 6–243 folds into the ABC transporter domain; that stretch reads ISFDHVTFTY…VEMLKRIGLD (238 aa). 40 to 47 is an ATP binding site; that stretch reads GHNGSGKS.

The protein belongs to the ABC transporter superfamily. Energy-coupling factor EcfA family. In terms of assembly, forms a stable energy-coupling factor (ECF) transporter complex composed of 2 membrane-embedded substrate-binding proteins (S component), 2 ATP-binding proteins (A component) and 2 transmembrane proteins (T component).

It is found in the cell membrane. ATP-binding (A) component of a common energy-coupling factor (ECF) ABC-transporter complex. Unlike classic ABC transporters this ECF transporter provides the energy necessary to transport a number of different substrates. This Lactobacillus delbrueckii subsp. bulgaricus (strain ATCC BAA-365 / Lb-18) protein is Energy-coupling factor transporter ATP-binding protein EcfA1.